The primary structure comprises 103 residues: uncharacterized protein (103 aa).

The segment at 1–103 is disordered; the sequence is MAGARRRARC…WRGGSCTSQR (103 aa). The segment covering 35 to 44 has biased composition (low complexity); the sequence is GSGQPRWWPW. Basic residues-rich tracts occupy residues 55 to 65 and 74 to 84; these read RRPGPGRRARS and RPPHSRTRARR.

The protein belongs to the epstein-barr virus RPMS1 family.

This is an uncharacterized protein from Homo sapiens (Human).